Here is a 432-residue protein sequence, read N- to C-terminus: Peptidase B (432 aa).

Mn(2+) is bound by residues Lys-196 and Asp-201. The active site involves Lys-208. Asp-219, Asp-278, and Glu-280 together coordinate Mn(2+). The active site involves Arg-282.

It belongs to the peptidase M17 family. In terms of assembly, homohexamer. Mn(2+) is required as a cofactor.

The protein localises to the cytoplasm. It carries out the reaction Release of an N-terminal amino acid, Xaa, from a peptide or arylamide. Xaa is preferably Glu or Asp but may be other amino acids, including Leu, Met, His, Cys and Gln.. Functionally, probably plays an important role in intracellular peptide degradation. In Vibrio parahaemolyticus serotype O3:K6 (strain RIMD 2210633), this protein is Peptidase B.